A 797-amino-acid chain; its full sequence is Homoaconitase, mitochondrial (797 aa).

Residues 1–47 (MVARFVPSAMTVLVARRGLAMASTRRGWRGLAVNLKPAAGRQWRQAY) constitute a mitochondrion transit peptide. Residues Cys404, Cys471, and Cys474 each contribute to the [4Fe-4S] cluster site.

Belongs to the aconitase/IPM isomerase family. [4Fe-4S] cluster is required as a cofactor.

It is found in the mitochondrion. The catalysed reaction is (2R,3S)-homoisocitrate = cis-homoaconitate + H2O. It functions in the pathway amino-acid biosynthesis; L-lysine biosynthesis via AAA pathway; L-alpha-aminoadipate from 2-oxoglutarate: step 3/5. Functionally, catalyzes the reversible hydration of cis-homoaconitate to (2R,3S)-homoisocitrate, a step in the alpha-aminoadipate pathway for lysine biosynthesis. This is Homoaconitase, mitochondrial (LYS4) from Chaetomium globosum (strain ATCC 6205 / CBS 148.51 / DSM 1962 / NBRC 6347 / NRRL 1970) (Soil fungus).